The primary structure comprises 239 residues: DNA repair protein RecO (239 aa).

This sequence belongs to the RecO family.

Its function is as follows. Involved in DNA repair and RecF pathway recombination. The protein is DNA repair protein RecO of Bifidobacterium longum (strain DJO10A).